A 360-amino-acid polypeptide reads, in one-letter code: Phenylalanine--tRNA ligase alpha subunit (360 aa).

Residue E260 coordinates Mg(2+).

It belongs to the class-II aminoacyl-tRNA synthetase family. Phe-tRNA synthetase alpha subunit type 1 subfamily. Tetramer of two alpha and two beta subunits. Mg(2+) serves as cofactor.

It is found in the cytoplasm. The catalysed reaction is tRNA(Phe) + L-phenylalanine + ATP = L-phenylalanyl-tRNA(Phe) + AMP + diphosphate + H(+). In Rhizobium etli (strain CIAT 652), this protein is Phenylalanine--tRNA ligase alpha subunit.